The sequence spans 331 residues: Ribose-phosphate pyrophosphokinase (331 aa).

55 to 57 is a binding site for ATP; the sequence is DGE. His-148 and Asp-187 together coordinate Mg(2+). Lys-211 is an active-site residue. D-ribose 5-phosphate is bound by residues Arg-213, Asp-237, and 241 to 245; that span reads DTAGT.

It belongs to the ribose-phosphate pyrophosphokinase family. Class I subfamily. Homohexamer. Requires Mg(2+) as cofactor.

It is found in the cytoplasm. It catalyses the reaction D-ribose 5-phosphate + ATP = 5-phospho-alpha-D-ribose 1-diphosphate + AMP + H(+). The protein operates within metabolic intermediate biosynthesis; 5-phospho-alpha-D-ribose 1-diphosphate biosynthesis; 5-phospho-alpha-D-ribose 1-diphosphate from D-ribose 5-phosphate (route I): step 1/1. In terms of biological role, involved in the biosynthesis of the central metabolite phospho-alpha-D-ribosyl-1-pyrophosphate (PRPP) via the transfer of pyrophosphoryl group from ATP to 1-hydroxyl of ribose-5-phosphate (Rib-5-P). This chain is Ribose-phosphate pyrophosphokinase, found in Synechococcus elongatus (strain ATCC 33912 / PCC 7942 / FACHB-805) (Anacystis nidulans R2).